A 454-amino-acid chain; its full sequence is NEDD8-activating enzyme E1 catalytic subunit (454 aa).

Position 2 is an N-acetylalanine (Ala-2). 56 to 80 provides a ligand contact to ATP; that stretch reads GLGCELLKDLALSGFRNLEVIDMDR. Cys-215 serves as the catalytic Glycyl thioester intermediate.

Belongs to the ubiquitin-activating E1 family. UBA3 subfamily. Heterodimer of UBA3/ECR1 and AXR1. Interacts with NEDD8 and RCE1. In terms of tissue distribution, expressed in shoot, root and floral meristems, in vascular tissues of cotyledons and mature leaves, and in the stele of the root.

The protein resides in the nucleus. The enzyme catalyses ATP + [NEDD8 protein] + [E1 NEDD8-activating enzyme]-L-cysteine = AMP + diphosphate + [E1 NEDD8-activating enzyme]-S-[NEDD8 protein]-yl-L-cysteine.. The protein operates within protein modification; protein neddylation. Catalytic subunit of the dimeric ECR1-AXR1 E1 enzyme. E1 activates NEDD8/RUB1 by first adenylating its C-terminal glycine residue with ATP, thereafter linking this residue to the side chain of the catalytic cysteine, yielding a NEDD8-ECR1 thioester and free AMP. E1 finally transfers NEDD8 to the catalytic cysteine of RCE1. The polypeptide is NEDD8-activating enzyme E1 catalytic subunit (ECR1) (Arabidopsis thaliana (Mouse-ear cress)).